Reading from the N-terminus, the 624-residue chain is MGDPLLPGSTGLGSGPAAAATGGSGTTGTGLGSGGTSGAERPPSPARLTHTSEKHPKVTLTELNMLRRHRELCDVVLNVGGRKIFAHRVILSACSSYFCAMFTGELEESRQTEVTIRDIDENAMELLIDFCYTAHIIVEESNVQTLLPAACLLQLVEIQDICCEFLKRQLDPTNCLGIRAFADTHSCRELLRIADKFTQHNFQEVMESEEFLLLPVGQLVDIICSDELNVRSEEQVFNAVMSWLKYNVAERRQHLAQVLQHVRLPLLSPKFLVGTVGSDLLVRSDEACRDLVDEAKNYLLLPQERPLMQGPRTRPRKPTRRGEVLFAVGGWCSGDAIASVERFDPQTNDWKMVAPMSKRRCGVGVAVLNDLLYAVGGHDGQSYLNSIERYDPQTNQWSCDVAPTTSCRTSVGVAVLDGFLYAVGGQDGVQCLNHVERYDPKENKWSKVAPMTTRRLGVAVAVLSGHLYAIGGSDGQCPLNTVERYDPRQNKWVAVNPMSTRRKHLGCAVFNNYIYAVGGRDDCMELSSAERYNPLTNTWSPIVAMTSRRSGVGLAVVNGQLYAVGGFDGSAYLKTIEVYDPETNQWRLCGCMNYRRLGGGVGVMRAPQTENYMWCDNSFLLHDR.

Residues 1–21 (MGDPLLPGSTGLGSGPAAAAT) are compositionally biased toward low complexity. The segment at 1 to 55 (MGDPLLPGSTGLGSGPAAAATGGSGTTGTGLGSGGTSGAERPPSPARLTHTSEKH) is disordered. Residues 22-37 (GGSGTTGTGLGSGGTS) show a composition bias toward gly residues. A BTB domain is found at 73 to 140 (CDVVLNVGGR…CYTAHIIVEE (68 aa)). The 103-residue stretch at 175–277 (CLGIRAFADT…SPKFLVGTVG (103 aa)) folds into the BACK domain. Kelch repeat units lie at residues 324–370 (VLFA…VLND), 372–418 (LYAV…VLDG), 419–465 (FLYA…VLSG), 467–512 (LYAI…VFNN), 514–559 (IYAV…VVNG), and 560–606 (QLYA…VMRA).

Its pathway is protein modification; protein ubiquitination. Its function is as follows. Probable substrate-specific adapter of an E3 ubiquitin-protein ligase complex which mediates the ubiquitination and subsequent proteasomal degradation of target proteins. May have a role in synapse differentiation and growth. The sequence is that of Kelch-like protein diablo from Drosophila virilis (Fruit fly).